A 382-amino-acid chain; its full sequence is Exostosin-1 homolog (382 aa).

The signal sequence occupies residues 1 to 20 (MQNVMKFHLVIFMLFGSVRL). A glycan (N-linked (GlcNAc...) asparagine) is linked at N268.

Belongs to the glycosyltransferase 47 family. As to quaternary structure, interacts with rib-2.

It localises to the endoplasmic reticulum. Its subcellular location is the golgi apparatus. Its function is as follows. Required for the biosynthesis of heparan sulfate by positively regulating N-acetylglucosamine transferase II (GlcNAcT-II) and glucuronyl transferase II (GlcAT-II) activities of glycosyltransferase rib-2. Probably not directly involved in chondroitin sulfate biosynthesis but negatively regulates chondroitin sulfate levels. Maternally required for normal ventral epidermal enclosure and for embryo elongation during the early stages of embryonic development. In addition, involved in the elongation of the pharyngeal isthmus and in the organization of the actin cytoskeleton in the pharyngeal muscles during the later stages embryonic development. In adults, regulates egg-laying and the normal morphogenesis of the vulva. Also involved in the directed migration of hermaphrodite-specific neurons. The polypeptide is Exostosin-1 homolog (rib-1) (Caenorhabditis elegans).